Consider the following 998-residue polypeptide: Sensor histidine kinase AruS (998 aa).

3 disordered regions span residues 27 to 82 (ERRP…HARA), 154 to 198 (RQAG…LPAG), and 224 to 245 (RQHPALAGRQRARLSAPRRQPR). Low complexity predominate over residues 40–49 (GEAAVRRAGL). The span at 161 to 183 (HRLHRPRTTHRHAVRRAPGRRRE) shows a compositional bias: basic residues. The next 2 membrane-spanning stretches (helical) occupy residues 264-284 (VLLFSLCFTVLAGAVQLFFEY) and 395-415 (ASLLWMGSFLCGLAVALSWLF). The HAMP domain maps to 417–473 (SLVTRHLWRMSEFAGHIAEGDLQQPLRLDKVDRERDEIDAVAAALEDMRQALRTDRR). A Histidine kinase domain is found at 513 to 734 (TMSHEIRTPL…TFWFEIELAL (222 aa)). At histidine 516 the chain carries Phosphohistidine; by autocatalysis. Residues 751–869 (EVLLVEDVAL…ELRRALGEVG (119 aa)) form the Response regulatory domain. Aspartate 800 carries the 4-aspartylphosphate modification. One can recognise an HPt domain in the interval 894–987 (GRHKLAGLLG…RDGAEALRRA (94 aa)). A Phosphohistidine modification is found at histidine 933.

Autophosphorylated. Activation may require a sequential transfer of a phosphate group from a His in the primary transmitter domain, to an Asp in the receiver domain and to a His in the secondary transmitter domain.

The protein resides in the cell membrane. It carries out the reaction ATP + protein L-histidine = ADP + protein N-phospho-L-histidine.. Its pathway is amino-acid degradation; L-arginine degradation [regulation]. Functionally, member of the two-component regulatory system AruS/AruR, which is involved in the regulation of the arginine transaminase (ATA) pathway in response to exogeneous L-arginine. Probably functions as a sensor kinase that phosphorylates AruR. The sequence is that of Sensor histidine kinase AruS (aruS) from Pseudomonas aeruginosa (strain ATCC 15692 / DSM 22644 / CIP 104116 / JCM 14847 / LMG 12228 / 1C / PRS 101 / PAO1).